We begin with the raw amino-acid sequence, 115 residues long: NADH-ubiquinone oxidoreductase chain 3 (115 aa).

3 helical membrane passes run 4–24 (LLAM…AFWL), 55–75 (FFLV…LLPI), and 87–107 (MMLT…YEWI).

This sequence belongs to the complex I subunit 3 family. As to quaternary structure, core subunit of respiratory chain NADH dehydrogenase (Complex I) which is composed of 45 different subunits. Interacts with TMEM186. Interacts with TMEM242.

It is found in the mitochondrion inner membrane. The enzyme catalyses a ubiquinone + NADH + 5 H(+)(in) = a ubiquinol + NAD(+) + 4 H(+)(out). Functionally, core subunit of the mitochondrial membrane respiratory chain NADH dehydrogenase (Complex I) which catalyzes electron transfer from NADH through the respiratory chain, using ubiquinone as an electron acceptor. Essential for the catalytic activity of complex I. This Neotoma floridana (Eastern woodrat) protein is NADH-ubiquinone oxidoreductase chain 3.